Reading from the N-terminus, the 434-residue chain is [Pyruvate dehydrogenase (acetyl-transferring)] kinase isozyme 1, mitochondrial (434 aa).

A mitochondrion-targeting transit peptide spans 1–26 (MRLARLLRGGTSVRPLCAVPCASRSL). Tyr-136 is subject to Phosphotyrosine; by FGFR1. Residues 161 to 391 (TEYKESFGVD…DAVIYIKALS (231 aa)) enclose the Histidine kinase domain. At Tyr-241 the chain carries Phosphotyrosine; by FGFR1, ABL1, FLT3 and JAK2. The residue at position 242 (Tyr-242) is a Phosphotyrosine; by FGFR1. ATP contacts are provided by residues 277–284 (ELFKNAMR), Asp-316, 335–336 (ST), and 352–357 (GFGYGL). Thr-336 is modified (phosphothreonine). The residue at position 403 (Lys-403) is an N6-succinyllysine.

It belongs to the PDK/BCKDK protein kinase family. Homodimer, and heterodimer with PDK2. Interacts with the pyruvate dehydrogenase complex subunit DLAT, and is part of the multimeric pyruvate dehydrogenase complex that contains multiple copies of pyruvate dehydrogenase (E1), dihydrolipoamide acetyltransferase (DLAT, E2) and lipoamide dehydrogenase (DLD, E3). Interacts with phosphoglycerate kinase PGK1; the interaction is direct, occurs under hypoxic conditions and leads to PDK1-mediated inhibition of pyruvate dehydrogenase complex activity. Post-translationally, phosphorylated by constitutively activated ABL1, FGFR1, FLT3 and JAK2 (in vitro), and this may also occur in cancer cells that express constitutively activated ABL1, FGFR1, FLT3 and JAK2. Phosphorylation at Tyr-241 and Tyr-242 strongly increases kinase activity, while phosphorylation at Tyr-136 has a lesser effect. Phosphorylated under hypoxic conditions at Thr-336 by phosphoglycerate kinase PGK1 which has an activating effect.

The protein resides in the mitochondrion matrix. The catalysed reaction is L-seryl-[pyruvate dehydrogenase E1 alpha subunit] + ATP = O-phospho-L-seryl-[pyruvate dehydrogenase E1 alpha subunit] + ADP + H(+). In terms of biological role, kinase that plays a key role in regulation of glucose and fatty acid metabolism and homeostasis via phosphorylation of the pyruvate dehydrogenase subunits PDHA1 and PDHA2. This inhibits pyruvate dehydrogenase activity, and thereby regulates metabolite flux through the tricarboxylic acid cycle, down-regulates aerobic respiration and inhibits the formation of acetyl-coenzyme A from pyruvate. Plays an important role in cellular responses to hypoxia and is important for cell proliferation under hypoxia. The sequence is that of [Pyruvate dehydrogenase (acetyl-transferring)] kinase isozyme 1, mitochondrial (Pdk1) from Mus musculus (Mouse).